Consider the following 288-residue polypeptide: Elongation factor Ts (288 aa).

Residues 82-85 (TDFV) are involved in Mg(2+) ion dislocation from EF-Tu.

Belongs to the EF-Ts family.

Its subcellular location is the cytoplasm. In terms of biological role, associates with the EF-Tu.GDP complex and induces the exchange of GDP to GTP. It remains bound to the aminoacyl-tRNA.EF-Tu.GTP complex up to the GTP hydrolysis stage on the ribosome. This is Elongation factor Ts from Pelodictyon phaeoclathratiforme (strain DSM 5477 / BU-1).